Here is a 181-residue protein sequence, read N- to C-terminus: CASP-like protein 2C1 (181 aa).

Residues 1 to 7 (MALEIPK) are Cytoplasmic-facing. A helical membrane pass occupies residues 8-28 (IEAILRGIAILLLVSTACLVG). At 29–49 (LDSQTKFVIVYEKEVTYKDLH) the chain is on the extracellular side. Residues 50 to 70 (ALVVLVYVDAVAAAYNLLQLC) form a helical membrane-spanning segment. Residues 71-98 (RCSVSALSKGNFKGSYRYLSWACFVLDQ) lie on the Cytoplasmic side of the membrane. Residues 99 to 119 (LAAYTTFAAHSAALQHSVLGI) form a helical membrane-spanning segment. Residues 120 to 140 (TGAKVFQWMKWCNRFTRFCFQ) lie on the Extracellular side of the membrane. A helical membrane pass occupies residues 141–161 (IGGALTCGYIASVLMVMISFI). The Cytoplasmic portion of the chain corresponds to 162–181 (SAFNLFRLYSPKHFLRLKGT).

The protein belongs to the Casparian strip membrane proteins (CASP) family. In terms of assembly, homodimer and heterodimers.

It localises to the cell membrane. This Populus trichocarpa (Western balsam poplar) protein is CASP-like protein 2C1.